We begin with the raw amino-acid sequence, 229 residues long: Heptaprenylglyceryl phosphate synthase (229 aa).

Lys12 provides a ligand contact to sn-glycerol 1-phosphate. The Mg(2+) site is built by Asp14 and Thr40. Sn-glycerol 1-phosphate-binding positions include 159-164 (YIEYSG), Gly189, and 209-210 (GN).

It belongs to the GGGP/HepGP synthase family. Group I subfamily. In terms of assembly, homodimer. Mg(2+) is required as a cofactor.

It carries out the reaction sn-glycerol 1-phosphate + all-trans-heptaprenyl diphosphate = 3-heptaprenyl-sn-glycero-1-phosphate + diphosphate. It participates in membrane lipid metabolism; glycerophospholipid metabolism. In terms of biological role, prenyltransferase that catalyzes in vivo the transfer of the heptaprenyl moiety of heptaprenyl pyrophosphate (HepPP; 35 carbon atoms) to the C3 hydroxyl of sn-glycerol-1-phosphate (G1P), producing heptaprenylglyceryl phosphate (HepGP). This reaction is an ether-bond-formation step in the biosynthesis of archaea-type G1P-based membrane lipids found in Bacillales. The polypeptide is Heptaprenylglyceryl phosphate synthase (Staphylococcus carnosus (strain TM300)).